We begin with the raw amino-acid sequence, 292 residues long: Mycothiol acetyltransferase (292 aa).

2 consecutive N-acetyltransferase domains span residues 2–138 and 141–292; these read AEVV…PSAP and VTVR…YAHS. Glutamate 33 lines the 1D-myo-inositol 2-(L-cysteinylamino)-2-deoxy-alpha-D-glucopyranoside pocket. Residue 68 to 70 participates in acetyl-CoA binding; it reads AVV. Glutamate 168, lysine 215, and glutamate 225 together coordinate 1D-myo-inositol 2-(L-cysteinylamino)-2-deoxy-alpha-D-glucopyranoside. Acetyl-CoA-binding positions include 229-231 and 236-242; these read VAV and QGRGLGR. Tyrosine 263 provides a ligand contact to 1D-myo-inositol 2-(L-cysteinylamino)-2-deoxy-alpha-D-glucopyranoside. 268 to 273 is a binding site for acetyl-CoA; the sequence is NAAALH.

This sequence belongs to the acetyltransferase family. MshD subfamily. Monomer.

It carries out the reaction 1D-myo-inositol 2-(L-cysteinylamino)-2-deoxy-alpha-D-glucopyranoside + acetyl-CoA = mycothiol + CoA + H(+). In terms of biological role, catalyzes the transfer of acetyl from acetyl-CoA to desacetylmycothiol (Cys-GlcN-Ins) to form mycothiol. This is Mycothiol acetyltransferase from Tsukamurella paurometabola (strain ATCC 8368 / DSM 20162 / CCUG 35730 / CIP 100753 / JCM 10117 / KCTC 9821 / NBRC 16120 / NCIMB 702349 / NCTC 13040) (Corynebacterium paurometabolum).